Consider the following 366-residue polypeptide: Homeobox-leucine zipper protein HOX21 (366 aa).

Disordered stretches follow at residues 25-81 (QQAA…SSAQ) and 94-132 (MLGK…EKKR). Residues 36–48 (HHHHHHHGHHGHH) show a composition bias toward basic residues. A compositionally biased stretch (pro residues) spans 62 to 74 (GPPPPPPPHPHNP). Residues 103-115 (GDGGGGGDEVNGG) are compositionally biased toward gly residues. The homeobox DNA-binding region spans 127–186 (AGEKKRRLNVEQVRTLEKNFELGNKLEPERKMQLARALGLQPRQVAIWFQNRRARWKTKQ). The tract at residues 185–229 (KQLEKDYDALKRQLDAVKAENDALLNHNKKLQAEIVALKGREAAS) is leucine-zipper. Disordered regions lie at residues 239–287 (EASC…GGGG) and 312–336 (LHSS…VQAA). Positions 240 to 252 (ASCSNRSENSSEI) are enriched in polar residues.

Belongs to the HD-ZIP homeobox family. Class I subfamily. As to expression, expressed in seedlings, roots, stems, leaf blades and panicles.

The protein localises to the nucleus. Probable transcription factor. This Oryza sativa subsp. japonica (Rice) protein is Homeobox-leucine zipper protein HOX21 (HOX21).